Here is a 442-residue protein sequence, read N- to C-terminus: Glycoprotein endo-alpha-1,2-mannosidase-like protein (442 aa).

Over M1–A8 the chain is Cytoplasmic. Residues C9 to L29 traverse the membrane as a helical; Signal-anchor for type II membrane protein segment. Residues K30–M442 are Lumenal-facing.

Belongs to the glycosyl hydrolase 99 family.

It is found in the golgi apparatus membrane. This is Glycoprotein endo-alpha-1,2-mannosidase-like protein (maneal) from Danio rerio (Zebrafish).